Here is a 303-residue protein sequence, read N- to C-terminus: Type II methyltransferase M.MjaI (303 aa).

It belongs to the N(4)/N(6)-methyltransferase family. N(4) subfamily.

The enzyme catalyses a 2'-deoxycytidine in DNA + S-adenosyl-L-methionine = an N(4)-methyl-2'-deoxycytidine in DNA + S-adenosyl-L-homocysteine + H(+). Its function is as follows. A beta subtype methylase that recognizes the double-stranded sequence 5'-CTAG-3', methylates C-1 on both strands, and protects the DNA from cleavage by the MjaI endonuclease. This is Type II methyltransferase M.MjaI (mjaIM) from Methanocaldococcus jannaschii (strain ATCC 43067 / DSM 2661 / JAL-1 / JCM 10045 / NBRC 100440) (Methanococcus jannaschii).